Consider the following 395-residue polypeptide: F-box/kelch-repeat protein At4g39570 (395 aa).

Residues 1-25 (MSSPERKRKRVTSTKNPSVKKKKKI) show a composition bias toward basic residues. Residues 1-29 (MSSPERKRKRVTSTKNPSVKKKKKISPVP) form a disordered region. Positions 29–75 (PTPIPSLPDDLLVSIFARVSRLYYPILSLVSKSFRSLLRSPELYETR) constitute an F-box domain. Kelch repeat units follow at residues 150 to 197 (DIYF…VIDG) and 198 to 246 (KIYV…RSAY).

In Arabidopsis thaliana (Mouse-ear cress), this protein is F-box/kelch-repeat protein At4g39570.